An 874-amino-acid polypeptide reads, in one-letter code: Alanine--tRNA ligase (874 aa).

His-562, His-566, Cys-665, and His-669 together coordinate Zn(2+).

This sequence belongs to the class-II aminoacyl-tRNA synthetase family. It depends on Zn(2+) as a cofactor.

It localises to the cytoplasm. It carries out the reaction tRNA(Ala) + L-alanine + ATP = L-alanyl-tRNA(Ala) + AMP + diphosphate. In terms of biological role, catalyzes the attachment of alanine to tRNA(Ala) in a two-step reaction: alanine is first activated by ATP to form Ala-AMP and then transferred to the acceptor end of tRNA(Ala). Also edits incorrectly charged Ser-tRNA(Ala) and Gly-tRNA(Ala) via its editing domain. This chain is Alanine--tRNA ligase, found in Pseudomonas putida (strain ATCC 700007 / DSM 6899 / JCM 31910 / BCRC 17059 / LMG 24140 / F1).